Here is a 400-residue protein sequence, read N- to C-terminus: MSESVRTNTSIWSKGMLSVIVAQFLSAFGDNALLFATLALLKAQFYPDWSQPVLQMVFVGAYILFAPFVGQIADSFAKGRVMMVANGLKLAGAAGVCLGINPFVGYTLVGIGAAAYSPAKYGILGELTTGDKLVKANGLMEASTIAAILLGSVAGGVLADWHVIAALVACALAYAGAVAANLFIPKLVAARPGQSWRLSAMTRSFFCACVVLWRNGETRFSLVGTGLFWGAGVTLRFLLVLWVPVALGITDNATPTYLNAMVAVGIVVGAGAAAKLVTLETVSRCMPAGILIGVVVAIFSLQHALLPAYALLLLIGMLGGFFVVPLNALLQERGKKSVGAGNAIAVQNLGENSAMLLMLGLYSLAVLVGVPAVAIGIGFGVLFALAIAALWIWQRRQASY.

12 helical membrane passes run Val-19–Ala-39, Val-53–Ala-73, Ala-91–Ile-111, Leu-139–Ala-159, Ile-164–Ile-184, Ser-195–Trp-213, Leu-227–Leu-247, Tyr-257–Val-277, Thr-281–Leu-301, Ala-304–Val-324, Asn-352–Ala-372, and Val-373–Trp-393.

The protein belongs to the major facilitator superfamily. LplT (TC 2.A.1.42) family.

It is found in the cell inner membrane. Functionally, catalyzes the facilitated diffusion of 2-acyl-glycero-3-phosphoethanolamine (2-acyl-GPE) into the cell. This Salmonella schwarzengrund (strain CVM19633) protein is Lysophospholipid transporter LplT.